A 414-amino-acid chain; its full sequence is MSVQTIQSESFIEEKRRITVLLDRDGRSVEEKVVNRDGVITIPNQSGHVQDRAVLFVPQLASRPDFIHISWKRNAEADITPIKSYIPYGFNIFTNSSGSIAKFIDTPVGKVYYSDTFEDNALSKWFPPEFVDQLLRYSEDNDLDITVTRGRVEVNRYYELTDDNLFPLNGTESVKTEAGIFQVDTEDDTDTSLSGLRCTWHTGSGALNKCQRTLFFYNQIYADKSSLSEVSLTLSEPVNLHPVVQIDLTSKRPIHNCEYYAYFNLPKYFFIDQFQSIPTLLFGEHDLELPEYKLSGFGSISLFTLQPGSINEVTLHSRYIKPTNDGSAFFEAAFTPQVFYACDTSIELTKRSPFYTGKIGYEHFFTDNTKFYYLNSTKMTINLPKLDSSDNLCIQLFTLGLVLFSVLYLIRKLF.

At 1 to 390 the chain is on the lumenal side; it reads MSVQTIQSES…INLPKLDSSD (390 aa). 4 N-linked (GlcNAc...) asparagine glycosylation sites follow: Asn44, Asn95, Asn169, and Asn375. A helical membrane pass occupies residues 391–410; sequence NLCIQLFTLGLVLFSVLYLI. The Cytoplasmic segment spans residues 411–414; the sequence is RKLF.

This sequence belongs to the PIGX family.

The protein resides in the endoplasmic reticulum membrane. It participates in glycolipid biosynthesis; glycosylphosphatidylinositol-anchor biosynthesis. Its function is as follows. Required for proper folding and/or the stability of a subset of proteins in the endoplasmic reticulum. Component of glycosylphosphatidylinositol-mannosyltransferase 1 which transfers the first of the 4 mannoses in the GPI-anchor precursors during GPI-anchor biosynthesis. Probably acts by stabilizing the mannosyltransferase GPI14. The protein is Protein PBN1 (PBN1) of Kluyveromyces lactis (strain ATCC 8585 / CBS 2359 / DSM 70799 / NBRC 1267 / NRRL Y-1140 / WM37) (Yeast).